Reading from the N-terminus, the 208-residue chain is Small ribosomal subunit protein uS4 (208 aa).

Residues 98-160 enclose the S4 RNA-binding domain; the sequence is RRLDNVVYRM…SKNNVQIQRA (63 aa).

It belongs to the universal ribosomal protein uS4 family. In terms of assembly, part of the 30S ribosomal subunit. Contacts protein S5. The interaction surface between S4 and S5 is involved in control of translational fidelity.

In terms of biological role, one of the primary rRNA binding proteins, it binds directly to 16S rRNA where it nucleates assembly of the body of the 30S subunit. With S5 and S12 plays an important role in translational accuracy. This is Small ribosomal subunit protein uS4 from Nautilia profundicola (strain ATCC BAA-1463 / DSM 18972 / AmH).